Here is a 419-residue protein sequence, read N- to C-terminus: MNIFDELKERGLVFQTTDEDALRKALEEGFVSYYTGYDPTADSLHLGHLVAILTSRRLQLAGHKPYALVGGATGLIGDPSFKDVERSLQTKETVVSWGNKIRGQLSNFLEFETGDNKAVLVNNYDWFSNISFIDFLRDVGKYFTVNYMMSKESVKKRIETGISYTEFAYQIMQGYDFYELNKNYNVTLQIGGSDQWGNMTAGTELIRRKSNGVSHVMTVPLITDSTGKKFGKSEGNAVWLDADKTSPYEMYQFWLNVMDADAVRFLKIFTFLSLKEIEDIRIQFEEAPHQRLAQKTLAREVVTLVHGEKAYKEAVNITEQLFAGNIKGLSVKELKQGLRGVPNYHVQTEDNLNIIDLLVTSGVVNSKRQAREDVSNGAIYINGDRIQDLEYTISENDKLENEITVIRRGKKKYFVLNFK.

Tyr-34 contacts L-tyrosine. Positions 39–48 (PTADSLHLGH) match the 'HIGH' region motif. Positions 169 and 173 each coordinate L-tyrosine. The short motif at 229–233 (KFGKS) is the 'KMSKS' region element. Lys-232 serves as a coordination point for ATP. An S4 RNA-binding domain is found at 352–419 (LNIIDLLVTS…KKKYFVLNFK (68 aa)).

This sequence belongs to the class-I aminoacyl-tRNA synthetase family. TyrS type 1 subfamily. As to quaternary structure, homodimer.

The protein localises to the cytoplasm. The catalysed reaction is tRNA(Tyr) + L-tyrosine + ATP = L-tyrosyl-tRNA(Tyr) + AMP + diphosphate + H(+). Catalyzes the attachment of tyrosine to tRNA(Tyr) in a two-step reaction: tyrosine is first activated by ATP to form Tyr-AMP and then transferred to the acceptor end of tRNA(Tyr). This chain is Tyrosine--tRNA ligase, found in Streptococcus agalactiae serotype Ia (strain ATCC 27591 / A909 / CDC SS700).